Reading from the N-terminus, the 394-residue chain is Homoserine O-succinyltransferase (394 aa).

An AB hydrolase-1 domain is found at 54 to 368; sequence NAVLICHALS…SSPAGHDAFL (315 aa). S160 functions as the Nucleophile in the catalytic mechanism. R236 serves as a coordination point for substrate. Catalysis depends on residues D331 and H364. D365 lines the substrate pocket.

Belongs to the AB hydrolase superfamily. MetX family. Homodimer.

Its subcellular location is the cytoplasm. It catalyses the reaction L-homoserine + succinyl-CoA = O-succinyl-L-homoserine + CoA. The protein operates within amino-acid biosynthesis; L-methionine biosynthesis via de novo pathway; O-succinyl-L-homoserine from L-homoserine: step 1/1. Transfers a succinyl group from succinyl-CoA to L-homoserine, forming succinyl-L-homoserine. The polypeptide is Homoserine O-succinyltransferase (Magnetococcus marinus (strain ATCC BAA-1437 / JCM 17883 / MC-1)).